A 178-amino-acid chain; its full sequence is Translation initiation factor IF-3 (178 aa).

The protein belongs to the IF-3 family. Monomer.

The protein localises to the cytoplasm. In terms of biological role, IF-3 binds to the 30S ribosomal subunit and shifts the equilibrium between 70S ribosomes and their 50S and 30S subunits in favor of the free subunits, thus enhancing the availability of 30S subunits on which protein synthesis initiation begins. The sequence is that of Translation initiation factor IF-3 from Nautilia profundicola (strain ATCC BAA-1463 / DSM 18972 / AmH).